The sequence spans 370 residues: Translocating chain-associated membrane protein 2 (370 aa).

The Cytoplasmic portion of the chain corresponds to 1–22 (MAFRRRTKSYPLFSQEFIIHNH). The helical transmembrane segment at 23-43 (ADIGFCLVLCVLIGLMFEVTA) threads the bilayer. At 44-75 (KTAFLFILPQYNISVPTADSETVHYHYGPKDL) the chain is on the extracellular side. Asparagine 55 is a glycosylation site (N-linked (GlcNAc...) asparagine). The helical transmembrane segment at 76–96 (VTILFYVVITIIFHAVVQEYI) threads the bilayer. At 97 to 119 (LDKISKRLHLSKVKHSKFNESGQ) the chain is on the cytoplasmic side. One can recognise a TLC domain in the interval 112–321 (SKFNESGQLL…HSQLRHWREY (210 aa)). Residues 120-140 (LLVFHLSAVAWCFYVIVTEGY) form a helical membrane-spanning segment. The Extracellular segment spans residues 141–159 (LTNPRSLWEDYPHVYLSFQ). A helical membrane pass occupies residues 160-180 (VKFFYLGQLAYWLHSLPELYF). Over 181-191 (QKVRKEEVPRQ) the chain is Cytoplasmic. Residues 192–209 (LQYICLYLLHITGAYLLN) form a helical membrane-spanning segment. Topologically, residues 210 to 214 (LSRLG) are extracellular. A helical transmembrane segment spans residues 215–235 (LILLLLQYSTEALFHMARLFH). The Cytoplasmic portion of the chain corresponds to 236 to 250 (FADENNERLFNAWAA). The chain crosses the membrane as a helical span at residues 251–271 (VFGVTRLFILTLAVLTIGFGL). Residues 272 to 287 (ARVENQVFDPEKGNFN) lie on the Extracellular side of the membrane. The chain crosses the membrane as a helical span at residues 288-308 (TLPCRLGMLLLVCVAQAWLMW). Over 309–370 (RFIHSQLRHW…SSRTKKLKSP (62 aa)) the chain is Cytoplasmic. A disordered region spans residues 332 to 370 (SAVPRPPAKLLKREPGYHENGVVKAENGTSSRTKKLKSP).

This sequence belongs to the TRAM family. Interacts with COL1A1. Interacts with SERCA2B.

The protein localises to the membrane. Its function is as follows. Necessary for collagen type I synthesis. May couple the activity of the ER Ca(2+) pump SERCA2B with the activity of the translocon. This coupling may increase the local Ca(2+) concentration at the site of collagen synthesis, and a high Ca(2+) concentration may be necessary for the function of molecular chaperones involved in collagen folding. Required for proper insertion of the first transmembrane helix N-terminus of TM4SF20 into the ER lumen, may act as a ceramide sensor for regulated alternative translocation (RAT). The chain is Translocating chain-associated membrane protein 2 (Tram2) from Mus musculus (Mouse).